A 549-amino-acid chain; its full sequence is uncharacterized protein (549 aa).

12 consecutive transmembrane segments (helical) span residues 27-47, 108-128, 146-166, 197-217, 233-253, 265-285, 308-328, 352-372, 399-419, 434-454, 472-492, and 501-521; these read ILRFAIPTFFFALFSAAYVFV, PIVVILNAITIFVPLGTGVIF, TGLVSTTLFALVTQIIVLAIA, AVAIGSEYVYILIGFNIIPML, FIAIVPPLSNLLNVLFVFLLV, VAAILVYFITFMAYVVYLISL, FLVISMVGLASFFRNGSLSIL, LVLLTGPIAIANLTSAAIFGV, TLLVCLVFAALLYLILAVGLG, LMLANQFSLIVQAQVFFVAIG, IVSLMQGVIVFVPLLFIFQAI, and IFIWLLTANAALAGLINVLIG.

It localises to the cell membrane. This is an uncharacterized protein from Mycoplasma pneumoniae (strain ATCC 29342 / M129 / Subtype 1) (Mycoplasmoides pneumoniae).